Here is an 87-residue protein sequence, read N- to C-terminus: Defensin-like protein 81 (87 aa).

The signal sequence occupies residues 1–27 (MTIKKFLPLLLSSLMVYSLILLPIISG). Intrachain disulfides connect Cys33–Cys69, Cys37–Cys57, Cys43–Cys67, and Cys47–Cys68.

Belongs to the DEFL family.

Its subcellular location is the secreted. This chain is Defensin-like protein 81, found in Arabidopsis thaliana (Mouse-ear cress).